We begin with the raw amino-acid sequence, 386 residues long: MQTTTITMGDVQYPYRLGTGCVDGIVTRLGELEASHYLVLCDATVAELYGHDLAARLRRSAGPASVLTHPAGEEHKGLGTLDTLADAALHAGVDRRGVVVALGGGVTGNIAGLLAALLFRGIRLVHVPTTVVAMLDSVLSLKQAVNAQVGKNLVGTFYPPVEVLADTAMLGTLPVREIRSGLCEVVKNALAIRPSMIDFLAAELRPDGRYADDVLRWMIDESVAAKAQVTEHDKYERREGLVLEYGHTVGHALEHASHGAVSHGAGVGVGMVAAAEVARRLGHVDADLVELHRELVGKVGVATTLPADVPTEEITYRLGFDNKRGYQPLPADHYAMVLLADVGQPLYQDGLPLTPAPRALVDEVVRELADAPSRIGASVGSAGGAS.

NAD(+) contacts are provided by residues Asp-42, 73 to 76 (EEHK), 105 to 109 (GVTGN), 129 to 130 (TT), 140 to 142 (SLK), and 151 to 152 (KN). Lys-142 is a catalytic residue. Glu-184 contributes to the Co(2+) binding site. Glu-244 is an active-site residue. Co(2+)-binding residues include His-247 and His-263.

The protein belongs to the sugar phosphate cyclases superfamily. DOI synthase family. NAD(+) serves as cofactor. Requires Co(2+) as cofactor.

It carries out the reaction D-glucose 6-phosphate = 2-deoxy-L-scyllo-inosose + phosphate. It functions in the pathway metabolic intermediate biosynthesis; 2-deoxystreptamine biosynthesis; 2-deoxystreptamine from D-glucose 6-phosphate: step 1/4. It participates in antibiotic biosynthesis; tobramycin biosynthesis. Catalyzes the intramolecular carbocycle formation from D-glucose-6-phosphate to 2-deoxy-scyllo-inosose (DOI). The polypeptide is 2-deoxy-scyllo-inosose synthase (tbmA) (Streptoalloteichus tenebrarius (strain ATCC 17920 / DSM 40477 / JCM 4838 / CBS 697.72 / NBRC 16177 / NCIMB 11028 / NRRL B-12390 / A12253. 1 / ISP 5477) (Streptomyces tenebrarius)).